Here is a 366-residue protein sequence, read N- to C-terminus: sn-glycerol-3-phosphate import ATP-binding protein UgpC (366 aa).

The region spanning L4–I235 is the ABC transporter domain. G37–S44 serves as a coordination point for ATP.

Belongs to the ABC transporter superfamily. sn-glycerol-3-phosphate importer (TC 3.A.1.1.3) family. In terms of assembly, the complex is composed of two ATP-binding proteins (UgpC), two transmembrane proteins (UgpA and UgpE) and a solute-binding protein (UgpB).

It is found in the cell inner membrane. It catalyses the reaction sn-glycerol 3-phosphate(out) + ATP + H2O = sn-glycerol 3-phosphate(in) + ADP + phosphate + H(+). Functionally, part of the ABC transporter complex UgpBAEC involved in sn-glycerol-3-phosphate (G3P) import. Responsible for energy coupling to the transport system. The polypeptide is sn-glycerol-3-phosphate import ATP-binding protein UgpC (Cupriavidus necator (strain ATCC 17699 / DSM 428 / KCTC 22496 / NCIMB 10442 / H16 / Stanier 337) (Ralstonia eutropha)).